The chain runs to 77 residues: Exodeoxyribonuclease 7 small subunit (77 aa).

This sequence belongs to the XseB family. As to quaternary structure, heterooligomer composed of large and small subunits.

It localises to the cytoplasm. The catalysed reaction is Exonucleolytic cleavage in either 5'- to 3'- or 3'- to 5'-direction to yield nucleoside 5'-phosphates.. Its function is as follows. Bidirectionally degrades single-stranded DNA into large acid-insoluble oligonucleotides, which are then degraded further into small acid-soluble oligonucleotides. The chain is Exodeoxyribonuclease 7 small subunit from Trichlorobacter lovleyi (strain ATCC BAA-1151 / DSM 17278 / SZ) (Geobacter lovleyi).